Here is a 447-residue protein sequence, read N- to C-terminus: Phosphoglucosamine mutase (447 aa).

S101 functions as the Phosphoserine intermediate in the catalytic mechanism. Mg(2+) is bound by residues S101, D242, D244, and D246. Phosphoserine is present on S101.

It belongs to the phosphohexose mutase family. Mg(2+) serves as cofactor. In terms of processing, activated by phosphorylation.

The enzyme catalyses alpha-D-glucosamine 1-phosphate = D-glucosamine 6-phosphate. In terms of biological role, catalyzes the conversion of glucosamine-6-phosphate to glucosamine-1-phosphate. The protein is Phosphoglucosamine mutase of Xanthobacter autotrophicus (strain ATCC BAA-1158 / Py2).